Consider the following 390-residue polypeptide: MKFVDEASILVVAGDGGNGCVSFRREKYIPKGGPDGGDGGDGGDVWMEADENLNTLIDYRFEKSFRAERGQNGASRDCTGKRGKDVTIKVPVGTRVIDQGTGETMGDMTKHGQRLLVAKGGWHGLGNTRFKSSVNRTPRQKTNGTPGDKRELLLELMLLADVGMLGMPNAGKSTFIRAVSAAKPKVADYPFTTLVPSLGVVRMDNEKSFVVADIPGLIEGAAEGAGLGIRFLKHLERCRVLLHLIDIDPIDGTDPVENARIIISELEKYSQDLAAKPRWLVFNKIDLLDKAEAEEKAKAIAEALGWEDKYYLISAASGLGVKDLCWDVMTFILENPVVQAEEAKQPEKVEFMWDDYHRQQLEEIAEEDDEDWDDDWDEDDEEGVEFIYKR.

Residues Met1–Leu159 enclose the Obg domain. The segment at Asn127–Gly147 is disordered. The segment covering Arg129–Thr145 has biased composition (polar residues). Residues Ala160–Leu333 form the OBG-type G domain. GTP is bound by residues Gly166 to Ser173, Phe191 to Val195, Asp213 to Gly216, Asn283 to Asp286, and Ser314 to Ala316. Mg(2+) contacts are provided by Ser173 and Thr193.

This sequence belongs to the TRAFAC class OBG-HflX-like GTPase superfamily. OBG GTPase family. In terms of assembly, monomer. Requires Mg(2+) as cofactor.

It is found in the cytoplasm. In terms of biological role, an essential GTPase which binds GTP, GDP and possibly (p)ppGpp with moderate affinity, with high nucleotide exchange rates and a fairly low GTP hydrolysis rate. Plays a role in control of the cell cycle, stress response, ribosome biogenesis and in those bacteria that undergo differentiation, in morphogenesis control. The chain is GTPase Obg from Shigella sonnei (strain Ss046).